The primary structure comprises 278 residues: Formamidopyrimidine-DNA glycosylase (278 aa).

Proline 2 serves as the catalytic Schiff-base intermediate with DNA. The active-site Proton donor is glutamate 3. Lysine 60 serves as the catalytic Proton donor; for beta-elimination activity. Residues histidine 95 and arginine 114 each contribute to the DNA site. The FPG-type zinc finger occupies 244-278; it reads WVYRRGGEPCRRCGTIIRRDKLSGRSTHWCPTCQG. Arginine 268 (proton donor; for delta-elimination activity) is an active-site residue.

This sequence belongs to the FPG family. In terms of assembly, monomer. It depends on Zn(2+) as a cofactor.

The enzyme catalyses Hydrolysis of DNA containing ring-opened 7-methylguanine residues, releasing 2,6-diamino-4-hydroxy-5-(N-methyl)formamidopyrimidine.. The catalysed reaction is 2'-deoxyribonucleotide-(2'-deoxyribose 5'-phosphate)-2'-deoxyribonucleotide-DNA = a 3'-end 2'-deoxyribonucleotide-(2,3-dehydro-2,3-deoxyribose 5'-phosphate)-DNA + a 5'-end 5'-phospho-2'-deoxyribonucleoside-DNA + H(+). Involved in base excision repair of DNA damaged by oxidation or by mutagenic agents. Acts as a DNA glycosylase that recognizes and removes damaged bases. Has a preference for oxidized purines, such as 7,8-dihydro-8-oxoguanine (8-oxoG). Has AP (apurinic/apyrimidinic) lyase activity and introduces nicks in the DNA strand. Cleaves the DNA backbone by beta-delta elimination to generate a single-strand break at the site of the removed base with both 3'- and 5'-phosphates. The polypeptide is Formamidopyrimidine-DNA glycosylase (Parasynechococcus marenigrum (strain WH8102)).